An 806-amino-acid polypeptide reads, in one-letter code: Leucine--tRNA ligase (806 aa).

A 'HIGH' region motif is present at residues 40–51 (PYPSGAGLHVGH). A 'KMSKS' region motif is present at residues 578–582 (KMSKS). Lys-581 is an ATP binding site.

The protein belongs to the class-I aminoacyl-tRNA synthetase family.

It localises to the cytoplasm. The catalysed reaction is tRNA(Leu) + L-leucine + ATP = L-leucyl-tRNA(Leu) + AMP + diphosphate. This chain is Leucine--tRNA ligase, found in Staphylococcus aureus (strain MSSA476).